The chain runs to 243 residues: Outer membrane protein A (243 aa).

Beta stranded transmembrane passes span 1–8 (LTAKLGYP), 13–21 (LDIYTRLGG), 48–57 (PVFAGGVEWA), 62–69 (IATRLEYQ), and 88–96 (LLSLGVSYR). Tandem repeats lie at residues 107–108 (AP), 109–110 (AP), 111–112 (AP), and 113–114 (AP). A 4 X 2 AA tandem repeats of A-P region spans residues 107-114 (APAPAPAP). The 128-residue stretch at 116–243 (VQTKHFTLKS…RRVEIEVKGI (128 aa)) folds into the OmpA-like domain. The cysteines at positions 217 and 229 are disulfide-linked.

This sequence belongs to the outer membrane OOP (TC 1.B.6) superfamily. OmpA family. In terms of assembly, monomer and homodimer.

It localises to the cell outer membrane. Its function is as follows. With TolR probably plays a role in maintaining the position of the peptidoglycan cell wall in the periplasm. Acts as a porin with low permeability that allows slow penetration of small solutes; an internal gate slows down solute passage. In terms of biological role, required for conjugation with F-type plasmids; probably serves as the mating receptor on recipient cells. The chain is Outer membrane protein A from Escherichia fergusonii.